The following is a 618-amino-acid chain: Manganese lipoxygenase (618 aa).

Positions 1–16 are cleaved as a signal peptide; the sequence is MRSRILAIVFAARHVA. Residues 36-45 are compositionally biased toward low complexity; the sequence is SSTTVLPSPT. Residues 36 to 58 are disordered; the sequence is SSTTVLPSPTQYTLPNNDPNQGA. Positions 46–58 are enriched in polar residues; sequence QYTLPNNDPNQGA. Positions 47-617 constitute a Lipoxygenase domain; the sequence is YTLPNNDPNQ…NPAVNPFFLS (571 aa). 5 N-linked (GlcNAc...) asparagine glycosylation sites follow: Asn60, Asn91, Asn106, Asn116, and Asn157. Residues His290, His294, His478, and Asn482 each coordinate Mn(2+). Residue Asn513 is glycosylated (N-linked (GlcNAc...) asparagine). Position 618 (Val618) interacts with Mn(2+).

The protein belongs to the lipoxygenase family. It depends on Mn(2+) as a cofactor. In terms of processing, N- and O-glycosylated.

The protein resides in the secreted. The enzyme catalyses (9Z,12Z)-octadecadienoate + O2 = (11S)-hydroperoxy-(9Z,12Z)-octadecadienoate. The catalysed reaction is (9Z,12Z)-octadecadienoate + O2 = (13R)-hydroperoxy-(9Z,11E)-octadecadienoate. It catalyses the reaction (9Z,12Z,15Z)-octadecatrienoate + O2 = (11S)-hydroperoxy-(9Z,12Z,15Z)-octadecatrienoate. It carries out the reaction (9Z,12Z,15Z)-octadecatrienoate + O2 = (13R)-hydroperoxy-(9Z,11E,15Z)-octadecatrienoate. In terms of biological role, lipoxygenase that metabolizes linoleic and alpha-linolenic acids to 11S- and 13R-hydroperoxy fatty acids. At the end of lipoxygenation, the intermediate product 11S-HPODE from linoleic acid is then transformed into 13R-HPODE as the final product. It also acts on alpha-linolenic acid producing 11S-HPOTrE and 13R-HPOTrE with subsequent transformation of 11S-HPOTrE to 13R-HPOTrE as the final product. Gamma-linolenic acid is a poor substrate. Oleate and arachidonate are not substrates. This chain is Manganese lipoxygenase, found in Gaeumannomyces tritici (Wheat and barley take-all root rot fungus).